The sequence spans 168 residues: HTH-type transcriptional regulator IscR (168 aa).

Residues 2–131 form the HTH rrf2-type domain; the sequence is KLTSKGRYAV…NNITLGELMT (130 aa). Residues 28 to 51 constitute a DNA-binding region (H-T-H motif); it reads LADISERQGISLSYLEQLFSKLRK. Cys-92, Cys-98, and Cys-104 together coordinate [2Fe-2S] cluster.

Requires [2Fe-2S] cluster as cofactor.

Regulates the transcription of several operons and genes involved in the biogenesis of Fe-S clusters and Fe-S-containing proteins. This Vibrio parahaemolyticus serotype O3:K6 (strain RIMD 2210633) protein is HTH-type transcriptional regulator IscR.